The primary structure comprises 462 residues: tRNA modification GTPase MnmE (462 aa).

Positions 27, 89, and 128 each coordinate (6S)-5-formyl-5,6,7,8-tetrahydrofolate. The TrmE-type G domain occupies 223–383 (GLKIAIVGRP…LEAAILAAVG (161 aa)). Residues 233–238 (NVGKSS), 252–258 (TDLPGRT), and 277–280 (DTAG) each bind GTP. 2 residues coordinate Mg(2+): S237 and T258. K462 provides a ligand contact to (6S)-5-formyl-5,6,7,8-tetrahydrofolate.

It belongs to the TRAFAC class TrmE-Era-EngA-EngB-Septin-like GTPase superfamily. TrmE GTPase family. Homodimer. Heterotetramer of two MnmE and two MnmG subunits. Requires K(+) as cofactor.

The protein resides in the cytoplasm. Its function is as follows. Exhibits a very high intrinsic GTPase hydrolysis rate. Involved in the addition of a carboxymethylaminomethyl (cmnm) group at the wobble position (U34) of certain tRNAs, forming tRNA-cmnm(5)s(2)U34. This Synechococcus sp. (strain ATCC 27144 / PCC 6301 / SAUG 1402/1) (Anacystis nidulans) protein is tRNA modification GTPase MnmE.